The primary structure comprises 65 residues: Large ribosomal subunit protein bL33 (65 aa).

The segment at 20–40 (VPPSEKRSPGVSRYTTEKNRR) is disordered.

This sequence belongs to the bacterial ribosomal protein bL33 family.

The sequence is that of Large ribosomal subunit protein bL33 from Prochlorococcus marinus (strain MIT 9211).